A 626-amino-acid polypeptide reads, in one-letter code: Glutamine--fructose-6-phosphate aminotransferase [isomerizing] (626 aa).

The active-site Nucleophile; for GATase activity is the Cys-2. The 221-residue stretch at 2–222 folds into the Glutamine amidotransferase type-2 domain; that stretch reads CGIVGYIGPQ…NGELARLTPT (221 aa). 2 SIS domains span residues 293-441 and 471-616; these read LPPS…QRQS and YIEA…VDQP. The active-site For Fru-6P isomerization activity is Lys-621.

As to quaternary structure, homodimer.

The protein resides in the cytoplasm. The catalysed reaction is D-fructose 6-phosphate + L-glutamine = D-glucosamine 6-phosphate + L-glutamate. Its function is as follows. Catalyzes the first step in hexosamine metabolism, converting fructose-6P into glucosamine-6P using glutamine as a nitrogen source. This chain is Glutamine--fructose-6-phosphate aminotransferase [isomerizing], found in Thermosynechococcus vestitus (strain NIES-2133 / IAM M-273 / BP-1).